Here is a 188-residue protein sequence, read N- to C-terminus: dCTP deaminase (188 aa).

Residues lysine 111–arginine 116, threonine 135–glutamate 137, glutamine 156, tyrosine 170, and glutamine 180 each bind dCTP. The active-site Proton donor/acceptor is the glutamate 137.

The protein belongs to the dCTP deaminase family. In terms of assembly, homotrimer.

The enzyme catalyses dCTP + H2O + H(+) = dUTP + NH4(+). It functions in the pathway pyrimidine metabolism; dUMP biosynthesis; dUMP from dCTP (dUTP route): step 1/2. Its function is as follows. Catalyzes the deamination of dCTP to dUTP. The polypeptide is dCTP deaminase (Nitrosococcus oceani (strain ATCC 19707 / BCRC 17464 / JCM 30415 / NCIMB 11848 / C-107)).